The primary structure comprises 327 residues: Serine/threonine-protein phosphatase alpha-1 isoform (327 aa).

Residues Asp-62, His-64, Asp-90, and Asn-122 each contribute to the Mn(2+) site. The active-site Proton donor is His-123. 2 residues coordinate Mn(2+): His-171 and His-246. Residues 308 to 327 (GSSGRPLTPPRGANNKNKKK) form a disordered region. Phosphothreonine is present on Thr-315.

This sequence belongs to the PPP phosphatase family. PP-1 subfamily. Interacts with Nop17l. The cofactor is Mn(2+).

The enzyme catalyses O-phospho-L-seryl-[protein] + H2O = L-seryl-[protein] + phosphate. The catalysed reaction is O-phospho-L-threonyl-[protein] + H2O = L-threonyl-[protein] + phosphate. The protein is Serine/threonine-protein phosphatase alpha-1 isoform (Pp1alpha-96A) of Drosophila melanogaster (Fruit fly).